A 395-amino-acid polypeptide reads, in one-letter code: Vomeronasal type-1 receptor 2 (395 aa).

A helical transmembrane segment spans residues 12–32 (LYPINISAAWHLGPLPVSCFV). At 33 to 51 (SNKYQCSLAFGATTGLRVL) the chain is on the extracellular side. Residues 52–72 (VVVVPQTQLSFLSSLCLVSLF) traverse the membrane as a helical segment. The Cytoplasmic portion of the chain corresponds to 73–93 (LHSLVSAHGEKPTKPVGLDPT). A helical transmembrane segment spans residues 94-114 (LFQVVVGILGNFSLLYYYMFL). Residues 115 to 170 (YFRGYKPRSTDLILRHLTVADSLVILSKRIPETMATFGLKHFDNYFGCKFLLYAHR) are Extracellular-facing. The helical transmembrane segment at 171–191 (VGRGVSIGSTCLLSVFQVITI) threads the bilayer. Over 192–208 (NPRNSRWAEMKVKAPTY) the chain is Cytoplasmic. The chain crosses the membrane as a helical span at residues 209 to 229 (IGLSNILCWAFHMLVNAIFPI). Over 230 to 267 (YTTGKWSNNNITKKGDLGYCSAPLSDEVTKSVYAALTS) the chain is Extracellular. N239 is a glycosylation site (N-linked (GlcNAc...) asparagine). Residues 268–288 (FHDVLCLGLMLWASSSIVLVL) form a helical membrane-spanning segment. Residues 289–316 (YRHKQQVQHICRNNLYPNSSPGNRAIQS) are Cytoplasmic-facing. The helical transmembrane segment at 317–337 (ILALVSTFALCYALSFITYVY) threads the bilayer. At 338–346 (LALFDNSSW) the chain is on the extracellular side. An N-linked (GlcNAc...) asparagine glycan is attached at N343. Residues 347 to 367 (WLVNTAALIIACFPTISPFVL) form a helical membrane-spanning segment. Residues 368 to 395 (MCRDPSRSRLCSICCRRNRRFFHDFRKM) lie on the Cytoplasmic side of the membrane.

Belongs to the G-protein coupled receptor 1 family.

Its subcellular location is the cell membrane. Functionally, putative pheromone receptor. The chain is Vomeronasal type-1 receptor 2 (VN1R2) from Homo sapiens (Human).